Consider the following 835-residue polypeptide: Ribonuclease R (835 aa).

The RNB domain maps to Arg-267–Ile-593. The S1 motif domain maps to Gly-652–Val-733. Over residues Leu-739–Lys-754 the composition is skewed to basic and acidic residues. Positions Leu-739–Gln-835 are disordered. Residues Arg-755–Ala-764 are compositionally biased toward basic residues. The span at Thr-765 to Ala-777 shows a compositional bias: low complexity. Over residues Pro-783–Gly-793 the composition is skewed to basic and acidic residues. Residues Lys-809–Arg-829 show a composition bias toward basic residues.

This sequence belongs to the RNR ribonuclease family. RNase R subfamily.

Its subcellular location is the cytoplasm. The enzyme catalyses Exonucleolytic cleavage in the 3'- to 5'-direction to yield nucleoside 5'-phosphates.. Functionally, 3'-5' exoribonuclease that releases 5'-nucleoside monophosphates and is involved in maturation of structured RNAs. The sequence is that of Ribonuclease R from Vibrio parahaemolyticus serotype O3:K6 (strain RIMD 2210633).